Reading from the N-terminus, the 44-residue chain is Photosystem I reaction center subunit IX (44 aa).

Residues 7–27 (YLSVAPVVSTIWFGALAGLLI) form a helical membrane-spanning segment.

It belongs to the PsaJ family.

It localises to the plastid. Its subcellular location is the chloroplast thylakoid membrane. In terms of biological role, may help in the organization of the PsaE and PsaF subunits. The polypeptide is Photosystem I reaction center subunit IX (Cucumis sativus (Cucumber)).